Consider the following 315-residue polypeptide: Lipoyl synthase (315 aa).

[4Fe-4S] cluster is bound by residues C62, C67, C73, C88, C92, C95, and S302. Residues 73–291 (CFGHGTATFM…GELAKKLGFS (219 aa)) form the Radical SAM core domain.

The protein belongs to the radical SAM superfamily. Lipoyl synthase family. It depends on [4Fe-4S] cluster as a cofactor.

It is found in the cytoplasm. The catalysed reaction is [[Fe-S] cluster scaffold protein carrying a second [4Fe-4S](2+) cluster] + N(6)-octanoyl-L-lysyl-[protein] + 2 oxidized [2Fe-2S]-[ferredoxin] + 2 S-adenosyl-L-methionine + 4 H(+) = [[Fe-S] cluster scaffold protein] + N(6)-[(R)-dihydrolipoyl]-L-lysyl-[protein] + 4 Fe(3+) + 2 hydrogen sulfide + 2 5'-deoxyadenosine + 2 L-methionine + 2 reduced [2Fe-2S]-[ferredoxin]. The protein operates within protein modification; protein lipoylation via endogenous pathway; protein N(6)-(lipoyl)lysine from octanoyl-[acyl-carrier-protein]: step 2/2. In terms of biological role, catalyzes the radical-mediated insertion of two sulfur atoms into the C-6 and C-8 positions of the octanoyl moiety bound to the lipoyl domains of lipoate-dependent enzymes, thereby converting the octanoylated domains into lipoylated derivatives. The polypeptide is Lipoyl synthase (Coxiella burnetii (strain CbuG_Q212) (Coxiella burnetii (strain Q212))).